The chain runs to 498 residues: Pyridine nucleotide-disulfide oxidoreductase domain-containing protein 1 (498 aa).

Met-1 is subject to N-acetylmethionine.

This sequence belongs to the class-I pyridine nucleotide-disulfide oxidoreductase family. PYROXD1 subfamily. FAD is required as a cofactor.

The protein localises to the nucleus. Its subcellular location is the cytoplasm. It is found in the myofibril. The protein resides in the sarcomere. Functionally, probable FAD-dependent oxidoreductase; involved in the cellular oxidative stress response. Required for normal sarcomere structure and muscle fiber integrity. This Rattus norvegicus (Rat) protein is Pyridine nucleotide-disulfide oxidoreductase domain-containing protein 1 (Pyroxd1).